Consider the following 422-residue polypeptide: Transcription initiation factor TFIID subunit 15b (422 aa).

Disordered regions lie at residues 1 to 24 (MAGM…DGYG), 47 to 94 (YGGR…PNPS), 111 to 263 (ALAP…DAAT), and 368 to 422 (MAEK…SRPY). Gly residues-rich tracts occupy residues 8-24 (DGGG…DGYG) and 47-83 (YGGR…GGGG). The RanBP2-type zinc finger occupies 84–115 (RDGDWRCPNPSCGNVNFARRVECNKCGALAPS). A compositionally biased stretch (gly residues) spans 123–133 (DRGGGGYSRGG). Positions 134–156 (GDSDRGGGRGGRNDSGRSYESSR) are enriched in basic and acidic residues. Composition is skewed to gly residues over residues 219-229 (PSYGGPRGGYG) and 236-247 (GGRGGRSGGYDG). The segment covering 252–263 (RRQEASYEDAAT) has biased composition (basic and acidic residues). Positions 280–371 (ARIYISNLPP…NKISVTMAEK (92 aa)) constitute an RRM domain. A compositionally biased stretch (gly residues) spans 382–397 (RGGGRGGGGGGYGGGG).

The protein belongs to the TAF15 family. In terms of assembly, component of the TFIID complex. TFIID is composed of TATA binding protein (TBP) and a number of TBP-associated factors (TAFs) whose MWs range from 14-217 kDa. Interacts with TAF4, TAF4B, TAF5, TAF12B and TAF14. Expressed in roots, leaves and inflorescences.

It localises to the nucleus. Functionally, TAFs are components of the transcription factor IID (TFIID) complex that is essential for mediating regulation of RNA polymerase transcription. The chain is Transcription initiation factor TFIID subunit 15b (TAF15B) from Arabidopsis thaliana (Mouse-ear cress).